Consider the following 257-residue polypeptide: uncharacterized protein (257 aa).

Catalysis depends on charge relay system residues Ser122 and His236.

It belongs to the peptidase S9B family.

This is an uncharacterized protein from Bacillus subtilis (strain 168).